The chain runs to 223 residues: Sigma non-opioid intracellular receptor 1 (223 aa).

Residues 1–9 lie on the Lumenal side of the membrane; sequence MQWAVGRRW. The tract at residues 2 to 8 is targeting to endoplasmic reticulum-associated lipid droplets; sequence QWAVGRR. A helical membrane pass occupies residues 10–30; the sequence is AWAALLLAVAAVLTQVVWLWL. Topologically, residues 31-223 are cytoplasmic; the sequence is GTQSFVFQRE…LTTYLFGQDP (193 aa). The interval 99–106 is important for ligand-binding; sequence SLSEYVLL. The segment at 177 to 223 is C-terminal hydrophobic region; the sequence is VIPSTLAFALADTVFSTQDFLTLFYTLRSYARGLRLELTTYLFGQDP.

The protein belongs to the ERG2 family. Homotrimer. Forms a ternary complex with ANK2 and ITPR3. The complex is disrupted by agonists. Interacts with KCNA4. Interacts with KCNA2; cocaine consumption leads to increased interaction. Interacts with RNF112 in an oxidative stress-regulated manner. As to expression, widely expressed with higher expression in liver, colon, prostate, placenta, small intestine, heart and pancreas. Expressed in the retina by retinal pigment epithelial cells. Expressed in alpha-motor neurons.

Its subcellular location is the nucleus inner membrane. It is found in the nucleus outer membrane. It localises to the nucleus envelope. The protein resides in the cytoplasmic vesicle. The protein localises to the endoplasmic reticulum membrane. Its subcellular location is the membrane. It is found in the lipid droplet. It localises to the cell junction. The protein resides in the cell membrane. The protein localises to the cell projection. Its subcellular location is the growth cone. It is found in the postsynaptic density membrane. Its function is as follows. Functions in lipid transport from the endoplasmic reticulum and is involved in a wide array of cellular functions probably through regulation of the biogenesis of lipid microdomains at the plasma membrane. Involved in the regulation of different receptors it plays a role in BDNF signaling and EGF signaling. Also regulates ion channels like the potassium channel and could modulate neurotransmitter release. Plays a role in calcium signaling through modulation together with ANK2 of the ITP3R-dependent calcium efflux at the endoplasmic reticulum. Plays a role in several other cell functions including proliferation, survival and death. Originally identified for its ability to bind various psychoactive drugs it is involved in learning processes, memory and mood alteration. Necessary for proper mitochondrial axonal transport in motor neurons, in particular the retrograde movement of mitochondria. Plays a role in protecting cells against oxidative stress-induced cell death via its interaction with RNF112. The protein is Sigma non-opioid intracellular receptor 1 (SIGMAR1) of Homo sapiens (Human).